Consider the following 308-residue polypeptide: Putative transposon Ty5-1 protein YCL074W (308 aa).

The chain is Putative transposon Ty5-1 protein YCL074W (TY5A) from Saccharomyces cerevisiae (strain ATCC 204508 / S288c) (Baker's yeast).